The primary structure comprises 336 residues: Torsin-1B (336 aa).

The N-terminal stretch at 1-24 (MRRIGAFGGSTALWALLAAHVAGA) is a signal peptide. The N-linked (GlcNAc...) asparagine glycan is linked to Asn64. 109 to 116 (GWAGTGKN) contributes to the ATP binding site. The N-linked (GlcNAc...) asparagine glycan is linked to Asn165.

The protein belongs to the ClpA/ClpB family. Torsin subfamily. Homohexamer. Interacts with TOR1A; the interaction may be specific of neural tissues. Interacts with TOR1AIP1; TOR1AIP1 is required for TOR1B location on the nuclear membrane. Interacts (ATP-bound) with TOR1AIP2; important for endoplasmic reticulum integrity. Post-translationally, N-glycosylated. In terms of tissue distribution, highly expressed in liver and muscle; lower expression levels are observed in brain (at protein level).

The protein resides in the endoplasmic reticulum lumen. Its subcellular location is the nucleus membrane. It catalyses the reaction ATP + H2O = ADP + phosphate + H(+). In terms of biological role, may serve as a molecular chaperone assisting in the proper folding of secreted and/or membrane proteins. Plays a role in non-neural cells nuclear envelope and endoplasmic reticulum integrity. May have a redundant function with TOR1A in non-neural tissues. This Mus musculus (Mouse) protein is Torsin-1B (Tor1b).